We begin with the raw amino-acid sequence, 962 residues long: UvrABC system protein A (962 aa).

38 to 45 contacts ATP; that stretch reads GISGSGKS. ABC transporter domains follow at residues 319-597 and 617-944; these read WSKS…PDSL and PSGR…RFLR. 649-656 contributes to the ATP binding site; sequence GVSGSGKS. The C4-type zinc-finger motif lies at 748–774; that stretch reads CEACGGDGIIKIEMHFLADVYVPCEVC.

This sequence belongs to the ABC transporter superfamily. UvrA family. In terms of assembly, forms a heterotetramer with UvrB during the search for lesions.

The protein localises to the cytoplasm. In terms of biological role, the UvrABC repair system catalyzes the recognition and processing of DNA lesions. UvrA is an ATPase and a DNA-binding protein. A damage recognition complex composed of 2 UvrA and 2 UvrB subunits scans DNA for abnormalities. When the presence of a lesion has been verified by UvrB, the UvrA molecules dissociate. This Methanothermobacter thermautotrophicus (strain ATCC 29096 / DSM 1053 / JCM 10044 / NBRC 100330 / Delta H) (Methanobacterium thermoautotrophicum) protein is UvrABC system protein A.